The sequence spans 295 residues: uncharacterized protein (295 aa).

Its subcellular location is the plastid. It is found in the chloroplast. This is an uncharacterized protein from Euglena gracilis.